The primary structure comprises 207 residues: Ribosomal RNA large subunit methyltransferase E (207 aa).

5 residues coordinate S-adenosyl-L-methionine: Gly49, Trp51, Asp69, Asp87, and Asp111. Lys151 serves as the catalytic Proton acceptor.

It belongs to the class I-like SAM-binding methyltransferase superfamily. RNA methyltransferase RlmE family.

The protein localises to the cytoplasm. The catalysed reaction is uridine(2552) in 23S rRNA + S-adenosyl-L-methionine = 2'-O-methyluridine(2552) in 23S rRNA + S-adenosyl-L-homocysteine + H(+). Functionally, specifically methylates the uridine in position 2552 of 23S rRNA at the 2'-O position of the ribose in the fully assembled 50S ribosomal subunit. This Oleidesulfovibrio alaskensis (strain ATCC BAA-1058 / DSM 17464 / G20) (Desulfovibrio alaskensis) protein is Ribosomal RNA large subunit methyltransferase E.